A 647-amino-acid chain; its full sequence is XK-related protein 4 (647 aa).

Basic and acidic residues predominate over residues 1 to 15 (MAAKSDGRLKMKKSS). Positions 1 to 44 (MAAKSDGRLKMKKSSDVAFTPLQNSDNSGSVQGLAPGLPSGSGA) are disordered. Positions 21–31 (PLQNSDNSGSV) are enriched in polar residues. The next 2 membrane-spanning stretches (helical) occupy residues 112–132 (WILAAVAVYFADVGTDIWLAV) and 142–162 (WFGLTLFFVVLGSLSVQVFSF). Residue serine 197 is modified to Phosphoserine. The tract at residues 197-238 (SAAGEGEVRPSTPQRQASNASKSNIAATNSGSNSNGATRTSG) is disordered. Over residues 207–236 (STPQRQASNASKSNIAATNSGSNSNGATRT) the composition is skewed to polar residues. Helical transmembrane passes span 245-265 (CSFCIWLLQSLIHILQLGQIW), 303-323 (HLLATFLESAPQLVLQLCIIV), 328-348 (LQALQGFTAAASLVSLAWALA), 362-382 (KPISYMAVIIQFCWHFFTIAA), 393-415 (VFQLYFGIFIVLHWCIMTFWIVH), 425-445 (WEEIVFDMVVGIIYIFSWFNV), 454-474 (LFIYYFVILLENTALSALWYL), and 484-504 (FAIPALCVVFSSFLTGVVFML).

Belongs to the XK family. Homodimer; homodimerization takes place upon caspase cleavage. Interacts with the processed C-terminus of XRCC4 (protein XRCC4, C-terminus); interaction promotes the phospholipid scramblase activity. Post-translationally, undergoes proteolytic processing by caspase-3 (CASP3), caspase-6 (CASP6) and caspase-7 (CASP7) to generate the XK-related protein 4, processed form, leading to its activation. Highly expressed in expressed in the brain; weakly expressed in the spleen, thymus, uterus, blood vessels and fetus.

Its subcellular location is the cell membrane. It carries out the reaction a 1,2-diacyl-sn-glycero-3-phospho-L-serine(in) = a 1,2-diacyl-sn-glycero-3-phospho-L-serine(out). Phospholipid scramblase activity is activated upon caspase cleavage to generate the XK-related protein 4, processed form. Does not act prior the onset of apoptosis. With respect to regulation, homodimerizes upon caspase cleavage. Phospholipid scramblase activity is activated following interaction with the processed C-terminus of XRCC4 (protein XRCC4, C-terminus). Its function is as follows. Phospholipid scramblase that promotes phosphatidylserine exposure on apoptotic cell surface. Phosphatidylserine is a specific marker only present at the surface of apoptotic cells and acts as a specific signal for engulfment. This chain is XK-related protein 4, found in Mus musculus (Mouse).